The chain runs to 463 residues: L-2-hydroxyglutarate dehydrogenase, mitochondrial (463 aa).

A mitochondrion-targeting transit peptide spans 1–51; sequence MVPALRYLVGACGRARGLFAGGSPGACGFASGRPRPLCGGSRSASTSSFDI. Residues lysine 104, lysine 155, and lysine 173 each carry the N6-acetyllysine modification.

This sequence belongs to the L2HGDH family. Requires FAD as cofactor. As to expression, widely expressed. Highly expressed in brain, testis and muscle. Expressed to a lower extent in lymphocytes, fibroblasts, keratinocytes, placenta, bladder, small intestine, liver and bone marrow.

The protein resides in the mitochondrion. The catalysed reaction is (S)-2-hydroxyglutarate + A = 2-oxoglutarate + AH2. This chain is L-2-hydroxyglutarate dehydrogenase, mitochondrial (L2HGDH), found in Homo sapiens (Human).